The sequence spans 211 residues: ATP phosphoribosyltransferase (211 aa).

This sequence belongs to the ATP phosphoribosyltransferase family. Short subfamily. In terms of assembly, heteromultimer composed of HisG and HisZ subunits.

Its subcellular location is the cytoplasm. It catalyses the reaction 1-(5-phospho-beta-D-ribosyl)-ATP + diphosphate = 5-phospho-alpha-D-ribose 1-diphosphate + ATP. Its pathway is amino-acid biosynthesis; L-histidine biosynthesis; L-histidine from 5-phospho-alpha-D-ribose 1-diphosphate: step 1/9. Functionally, catalyzes the condensation of ATP and 5-phosphoribose 1-diphosphate to form N'-(5'-phosphoribosyl)-ATP (PR-ATP). Has a crucial role in the pathway because the rate of histidine biosynthesis seems to be controlled primarily by regulation of HisG enzymatic activity. The chain is ATP phosphoribosyltransferase from Pseudomonas putida (strain ATCC 700007 / DSM 6899 / JCM 31910 / BCRC 17059 / LMG 24140 / F1).